We begin with the raw amino-acid sequence, 324 residues long: Fe-S cluster assembly protein dre2 (324 aa).

Residues 28-158 are N-terminal SAM-like domain; sequence GSPSKRTLLL…KMDQPKSFAI (131 aa). The tract at residues 159–217 is linker; the sequence is PLRRNGKKKDAAKTETFAPAPAPAPPVQPVTVGMINNDDDYENDDDLIDEDTLLSDEDL. Cys-226, Cys-237, Cys-240, and Cys-242 together coordinate [2Fe-2S] cluster. A fe-S binding site A region spans residues 226-242; sequence CQPKPGRRRRACKDCTC. [4Fe-4S] cluster is bound by residues Cys-287, Cys-290, Cys-298, and Cys-301. 2 short sequence motifs (cx2C motif) span residues 287–290 and 298–301; these read CGNC and CAGC. A fe-S binding site B region spans residues 287–301; the sequence is CGNCALGDAFRCAGC.

The protein belongs to the anamorsin family. Monomer. Interacts with tah18. Interacts with mia40. [2Fe-2S] cluster serves as cofactor. The cofactor is [4Fe-4S] cluster.

It localises to the cytoplasm. The protein resides in the mitochondrion intermembrane space. Its function is as follows. Component of the cytosolic iron-sulfur (Fe-S) protein assembly (CIA) machinery required for the maturation of extramitochondrial Fe-S proteins. Part of an electron transfer chain functioning in an early step of cytosolic Fe-S biogenesis, facilitating the de novo assembly of a [4Fe-4S] cluster on the scaffold complex cfd1-nbp35. Electrons are transferred to dre2 from NADPH via the FAD- and FMN-containing protein tah18. Tah18-dre2 are also required for the assembly of the diferric tyrosyl radical cofactor of ribonucleotide reductase (RNR), probably by providing electrons for reduction during radical cofactor maturation in the catalytic small subunit rnr2. The polypeptide is Fe-S cluster assembly protein dre2 (Aspergillus niger (strain ATCC MYA-4892 / CBS 513.88 / FGSC A1513)).